Consider the following 153-residue polypeptide: Xanthine-guanine phosphoribosyltransferase (153 aa).

5-phospho-alpha-D-ribose 1-diphosphate contacts are provided by residues 37–38 (RG), Arg-69, and 88–96 (DDLVDTGGT). Arg-69 provides a ligand contact to GMP. Asp-89 contacts Mg(2+). Asp-92 and Ile-135 together coordinate guanine. Xanthine is bound by residues Asp-92 and Ile-135. Residues 92–96 (DTGGT) and 134–135 (WI) contribute to the GMP site.

This sequence belongs to the purine/pyrimidine phosphoribosyltransferase family. XGPT subfamily. In terms of assembly, homotetramer. It depends on Mg(2+) as a cofactor.

The protein resides in the cell inner membrane. The catalysed reaction is GMP + diphosphate = guanine + 5-phospho-alpha-D-ribose 1-diphosphate. It carries out the reaction XMP + diphosphate = xanthine + 5-phospho-alpha-D-ribose 1-diphosphate. The enzyme catalyses IMP + diphosphate = hypoxanthine + 5-phospho-alpha-D-ribose 1-diphosphate. Its pathway is purine metabolism; GMP biosynthesis via salvage pathway; GMP from guanine: step 1/1. It functions in the pathway purine metabolism; XMP biosynthesis via salvage pathway; XMP from xanthine: step 1/1. In terms of biological role, purine salvage pathway enzyme that catalyzes the transfer of the ribosyl-5-phosphate group from 5-phospho-alpha-D-ribose 1-diphosphate (PRPP) to the N9 position of the 6-oxopurines guanine and xanthine to form the corresponding ribonucleotides GMP (guanosine 5'-monophosphate) and XMP (xanthosine 5'-monophosphate), with the release of PPi. To a lesser extent, also acts on hypoxanthine. The polypeptide is Xanthine-guanine phosphoribosyltransferase (Proteus mirabilis (strain HI4320)).